The following is a 566-amino-acid chain: Arginine--tRNA ligase (566 aa).

Residues Ala-129–His-139 carry the 'HIGH' region motif.

This sequence belongs to the class-I aminoacyl-tRNA synthetase family. Monomer.

It localises to the cytoplasm. It carries out the reaction tRNA(Arg) + L-arginine + ATP = L-arginyl-tRNA(Arg) + AMP + diphosphate. This chain is Arginine--tRNA ligase, found in Wolbachia pipientis subsp. Culex pipiens (strain wPip).